Reading from the N-terminus, the 256-residue chain is Glucanase inhibitor protein 2 (256 aa).

The N-terminal stretch at 1–15 (MKLISTIAAATTAFG) is a signal peptide. The 228-residue stretch at 27 to 254 (IFGGGIIPSG…ATEWINSVTK (228 aa)) folds into the Peptidase S1 domain. Cysteine 54 and cysteine 70 are disulfide-bonded. Residues asparagine 87, asparagine 102, asparagine 107, and asparagine 157 are each glycosylated (N-linked (GlcNAc...) asparagine). 2 cysteine pairs are disulfide-bonded: cysteine 177–cysteine 189 and cysteine 199–cysteine 230.

Belongs to the peptidase S1 family. As to quaternary structure, forms an apoplastic complex with host endoglucanases in tomato leaves during P.infestans infection.

The protein localises to the secreted. In terms of biological role, secreted effector that suppresses host plant glucan elicitor-mediated defense responses. Targets host endoglucanases and inhibits the endoglucanase-mediated release of elicitor-active glucan oligosaccharides from P.infestans cell walls. This Phytophthora infestans (Potato late blight agent) protein is Glucanase inhibitor protein 2.